Consider the following 273-residue polypeptide: tRNA pseudouridine synthase B (273 aa).

Catalysis depends on D38, which acts as the Nucleophile.

It belongs to the pseudouridine synthase TruB family. Type 1 subfamily.

It carries out the reaction uridine(55) in tRNA = pseudouridine(55) in tRNA. In terms of biological role, responsible for synthesis of pseudouridine from uracil-55 in the psi GC loop of transfer RNAs. This is tRNA pseudouridine synthase B from Campylobacter curvus (strain 525.92).